A 319-amino-acid polypeptide reads, in one-letter code: Acetyl esterase (319 aa).

Positions 91 to 93 (HGG) match the Involved in the stabilization of the negatively charged intermediate by the formation of the oxyanion hole motif. Residues Ser165, Asp262, and His292 contribute to the active site.

It belongs to the 'GDXG' lipolytic enzyme family. Homodimer. Interacts with MalT and MelA.

It is found in the cytoplasm. In terms of biological role, displays esterase activity towards short chain fatty esters (acyl chain length of up to 8 carbons). Able to hydrolyze triacetylglycerol (triacetin) and tributyrylglycerol (tributyrin), but not trioleylglycerol (triolein) or cholesterol oleate. Negatively regulates MalT activity by antagonizing maltotriose binding. Inhibits MelA galactosidase activity. The sequence is that of Acetyl esterase from Escherichia coli O139:H28 (strain E24377A / ETEC).